Consider the following 412-residue polypeptide: Zinc finger protein 821 (412 aa).

The interval 26–83 (RQAMMKTDFPGDLGSQRQAIQQLRDQDSSSSDSEGDEEETTQDEVSSHTSEEDGGVVK) is disordered. Acidic residues predominate over residues 58-67 (SEGDEEETTQ). 2 consecutive C2H2-type zinc fingers follow at residues 116 to 140 (ELCQ…VYQH) and 150 to 172 (YMCP…LLIH). The stretch at 257–366 (KWALRRQNEP…EKMDMMLRAQ (110 aa)) forms a coiled coil. Residues 278–319 (RTAKKSRRDNETPEEREVRRMRDREAKRLQRMQETDEQRARR) are disordered.

Belongs to the krueppel C2H2-type zinc-finger protein family.

The protein localises to the nucleus. Functionally, may be involved in transcriptional regulation. This Homo sapiens (Human) protein is Zinc finger protein 821 (ZNF821).